The sequence spans 273 residues: Formamidopyrimidine-DNA glycosylase (273 aa).

P2 acts as the Schiff-base intermediate with DNA in catalysis. The active-site Proton donor is E3. The active-site Proton donor; for beta-elimination activity is K58. H91, R109, and R154 together coordinate DNA. The segment at 239–273 adopts an FPG-type zinc-finger fold; the sequence is FVYARTGEPCRICNAPVRQIVQGQRSTFYCPNCQK. R263 acts as the Proton donor; for delta-elimination activity in catalysis.

This sequence belongs to the FPG family. In terms of assembly, monomer. Zn(2+) is required as a cofactor.

It catalyses the reaction Hydrolysis of DNA containing ring-opened 7-methylguanine residues, releasing 2,6-diamino-4-hydroxy-5-(N-methyl)formamidopyrimidine.. It carries out the reaction 2'-deoxyribonucleotide-(2'-deoxyribose 5'-phosphate)-2'-deoxyribonucleotide-DNA = a 3'-end 2'-deoxyribonucleotide-(2,3-dehydro-2,3-deoxyribose 5'-phosphate)-DNA + a 5'-end 5'-phospho-2'-deoxyribonucleoside-DNA + H(+). Functionally, involved in base excision repair of DNA damaged by oxidation or by mutagenic agents. Acts as a DNA glycosylase that recognizes and removes damaged bases. Has a preference for oxidized purines, such as 7,8-dihydro-8-oxoguanine (8-oxoG). Has AP (apurinic/apyrimidinic) lyase activity and introduces nicks in the DNA strand. Cleaves the DNA backbone by beta-delta elimination to generate a single-strand break at the site of the removed base with both 3'- and 5'-phosphates. In Herminiimonas arsenicoxydans, this protein is Formamidopyrimidine-DNA glycosylase.